A 234-amino-acid chain; its full sequence is Segregation and condensation protein A (234 aa).

Belongs to the ScpA family. As to quaternary structure, component of a cohesin-like complex composed of ScpA, ScpB and the Smc homodimer, in which ScpA and ScpB bind to the head domain of Smc. The presence of the three proteins is required for the association of the complex with DNA.

It is found in the cytoplasm. Participates in chromosomal partition during cell division. May act via the formation of a condensin-like complex containing Smc and ScpB that pull DNA away from mid-cell into both cell halves. The polypeptide is Segregation and condensation protein A (Streptococcus pyogenes serotype M12 (strain MGAS2096)).